The primary structure comprises 179 residues: Guanosine-3',5'-bis(diphosphate) 3'-pyrophosphohydrolase MESH1 (179 aa).

The residue at position 2 (glycine 2) is an N-acetylglycine. At lysine 25 the chain carries N6-acetyllysine. Positions 32–127 (YINHPIGVAR…VKLADKLYNL (96 aa)) constitute an HD domain. Histidine 35, histidine 61, and aspartate 62 together coordinate Mn(2+). Catalysis depends on nucleophile residues glutamate 65 and aspartate 66. Lysine 97 bears the N6-acetyllysine mark. Aspartate 122 lines the Mn(2+) pocket. Lysine 123 carries the post-translational modification N6-acetyllysine.

The protein belongs to the MESH1 family. The cofactor is Mn(2+).

It catalyses the reaction guanosine 3',5'-bis(diphosphate) + H2O = GDP + diphosphate + H(+). Functionally, ppGpp hydrolyzing enzyme involved in starvation response. This chain is Guanosine-3',5'-bis(diphosphate) 3'-pyrophosphohydrolase MESH1 (HDDC3), found in Homo sapiens (Human).